A 442-amino-acid chain; its full sequence is Meiosis-specific with OB domain-containing protein (442 aa).

Residues 167–272 constitute a DNA-binding region (OB); the sequence is IINVLAAVKS…EANILLNFIR (106 aa).

Belongs to the MEIOB family. As to quaternary structure, component of a multiprotein complex with RPA2 and SPATA22. Interacts with SPATA22. Interacts with the complex BRME1:HSF2BP:BRCA2. In fetal gonads, specifically expressed in the ovary starting at the 14th weeks post fertilization. In the adult, restricted to testis.

The protein resides in the cytoplasm. Its subcellular location is the nucleus. It localises to the chromosome. In terms of biological role, single-stranded DNA-binding protein required for homologous recombination in meiosis I. Required for double strand breaks (DSBs) repair and crossover formation and promotion of faithful and complete synapsis. Not required for the initial loading of recombinases but required to maintain a proper number of RAD51 and DMC1 foci after the zygotene stage. May act by ensuring the stabilization of recombinases, which is required for successful homology search and meiotic recombination. Displays Single-stranded DNA 3'-5' exonuclease activity in vitro. The sequence is that of Meiosis-specific with OB domain-containing protein from Homo sapiens (Human).